The following is a 247-amino-acid chain: L-cystine import ATP-binding protein TcyC (247 aa).

The ABC transporter domain maps to 2-240; that stretch reads LTVKGLNKSF…PKEERTQRFL (239 aa). 34–41 contributes to the ATP binding site; that stretch reads GPSGSGKT.

It belongs to the ABC transporter superfamily. L-cystine importer (TC 3.A.1.3.14) family. The complex is composed of two ATP-binding proteins (TcyC), two transmembrane proteins (TcyB) and a solute-binding protein (TcyA).

It is found in the cell membrane. Its function is as follows. Part of the ABC transporter complex TcyABC involved in L-cystine import. Responsible for energy coupling to the transport system. This is L-cystine import ATP-binding protein TcyC (tcyC) from Bacillus subtilis (strain 168).